Consider the following 375-residue polypeptide: 23S rRNA (uracil(747)-C(5))-methyltransferase RlmC (375 aa).

Positions 3, 11, 14, and 87 each coordinate [4Fe-4S] cluster. S-adenosyl-L-methionine contacts are provided by Gln212, Phe241, Glu262, and Asn307. Cys334 serves as the catalytic Nucleophile.

The protein belongs to the class I-like SAM-binding methyltransferase superfamily. RNA M5U methyltransferase family. RlmC subfamily.

The catalysed reaction is uridine(747) in 23S rRNA + S-adenosyl-L-methionine = 5-methyluridine(747) in 23S rRNA + S-adenosyl-L-homocysteine + H(+). Its function is as follows. Catalyzes the formation of 5-methyl-uridine at position 747 (m5U747) in 23S rRNA. The polypeptide is 23S rRNA (uracil(747)-C(5))-methyltransferase RlmC (Escherichia coli (strain K12 / MC4100 / BW2952)).